A 101-amino-acid chain; its full sequence is Putative membrane protein insertion efficiency factor (101 aa).

This sequence belongs to the UPF0161 family.

The protein localises to the cell inner membrane. Could be involved in insertion of integral membrane proteins into the membrane. In Methylobacterium sp. (strain 4-46), this protein is Putative membrane protein insertion efficiency factor.